A 104-amino-acid polypeptide reads, in one-letter code: Large ribosomal subunit protein uL24 (104 aa).

This sequence belongs to the universal ribosomal protein uL24 family. In terms of assembly, part of the 50S ribosomal subunit.

Functionally, one of two assembly initiator proteins, it binds directly to the 5'-end of the 23S rRNA, where it nucleates assembly of the 50S subunit. One of the proteins that surrounds the polypeptide exit tunnel on the outside of the subunit. The protein is Large ribosomal subunit protein uL24 of Dichelobacter nodosus (strain VCS1703A).